Consider the following 134-residue polypeptide: Small ribosomal subunit protein uS11 (134 aa).

It belongs to the universal ribosomal protein uS11 family. Part of the 30S ribosomal subunit. Interacts with proteins S7 and S18. Binds to IF-3.

Its function is as follows. Located on the platform of the 30S subunit, it bridges several disparate RNA helices of the 16S rRNA. Forms part of the Shine-Dalgarno cleft in the 70S ribosome. This Corynebacterium jeikeium (strain K411) protein is Small ribosomal subunit protein uS11.